A 736-amino-acid polypeptide reads, in one-letter code: Protein DSF2 (736 aa).

The span at 1–10 shows a compositional bias: polar residues; that stretch reads MNQNLKNTSW. Disordered stretches follow at residues 1-46, 178-208, 229-410, and 440-461; these read MNQN…DSQF, SGMK…SPNP, ISDN…SGEN, and FKTA…ARPN. Over residues 14–24 the composition is skewed to basic and acidic residues; it reads IGSDDQERKAN. Polar residues-rich tracts occupy residues 25–46 and 197–208; these read SSEV…DSQF and ENGNRSTNSPNP. Positions 238–256 are enriched in low complexity; sequence NNANSKNNRTTSNNINTST. Over residues 264–284 the composition is skewed to polar residues; it reads KQSCPNEFTTTQKSNCLYRNG. Composition is skewed to low complexity over residues 285-294, 303-318, and 335-350; these read SSTSTNTSFS, KTQS…FSKL, and SNSS…TMTN. Positions 374 to 385 are enriched in basic residues; the sequence is KLFKSPRTRAKN. Polar residues predominate over residues 392 to 410; the sequence is EGSSPIRSATNSLDFSGEN.

This Saccharomyces cerevisiae (strain ATCC 204508 / S288c) (Baker's yeast) protein is Protein DSF2 (DSF2).